Here is a 746-residue protein sequence, read N- to C-terminus: UvrABC system protein C (746 aa).

One can recognise a GIY-YIG domain in the interval 18–97 (AKPGVYKWRD…IKEFDPRFNV (80 aa)). One can recognise a UVR domain in the interval 211–246 (RPYIAQLTRDMKEASAELEFEKAARLRDQIQMLETV). Residues 557 to 577 (ANGNDNGEGGSDISGKGHAVP) form a disordered region.

The protein belongs to the UvrC family. Interacts with UvrB in an incision complex.

The protein localises to the cytoplasm. Its function is as follows. The UvrABC repair system catalyzes the recognition and processing of DNA lesions. UvrC both incises the 5' and 3' sides of the lesion. The N-terminal half is responsible for the 3' incision and the C-terminal half is responsible for the 5' incision. The chain is UvrABC system protein C from Bifidobacterium longum (strain NCC 2705).